A 133-amino-acid chain; its full sequence is p53 and DNA damage-regulated protein 1 (133 aa).

Belongs to the prefoldin subunit beta family. Component of the PAQosome complex which is responsible for the biogenesis of several protein complexes and which consists of R2TP complex members RUVBL1, RUVBL2, RPAP3 and PIH1D1, URI complex members PFDN2, PFDN6, PDRG1, UXT and URI1 as well as ASDURF, POLR2E and DNAAF10/WDR92.

Its subcellular location is the cytoplasm. In terms of biological role, may play a role in chaperone-mediated protein folding. The polypeptide is p53 and DNA damage-regulated protein 1 (Pdrg1) (Rattus norvegicus (Rat)).